The chain runs to 174 residues: Gamma-crystallin C (174 aa).

2 Beta/gamma crystallin 'Greek key' domains span residues glycine 2–serine 40 and glycine 41–proline 83. Residue cysteine 23 is modified to S-methylcysteine. Residues histidine 84–serine 87 are connecting peptide. 2 Beta/gamma crystallin 'Greek key' domains span residues histidine 88 to glutamate 128 and glycine 129 to valine 171.

It belongs to the beta/gamma-crystallin family.

Crystallins are the dominant structural components of the vertebrate eye lens. In Mus musculus (Mouse), this protein is Gamma-crystallin C (Crygc).